We begin with the raw amino-acid sequence, 204 residues long: Urease accessory protein UreE (204 aa).

Positions 172 to 190 are enriched in basic and acidic residues; the sequence is HGHAHSHDHDHDHDHDHQH. The disordered stretch occupies residues 172–204; it reads HGHAHSHDHDHDHDHDHQHGPGCTHGHHGHDHH.

The protein belongs to the UreE family.

It is found in the cytoplasm. Functionally, involved in urease metallocenter assembly. Binds nickel. Probably functions as a nickel donor during metallocenter assembly. The chain is Urease accessory protein UreE from Burkholderia orbicola (strain AU 1054).